The sequence spans 168 residues: Gastrula zinc finger protein XlCGF7.1 (168 aa).

6 C2H2-type zinc fingers span residues 6-28 (FTCT…QRTH), 34-56 (FTCT…LKCH), 62-84 (FMCT…RKIH), 90-112 (YICT…QTVH), 118-140 (FTCS…QKIH), and 146-168 (FKCN…ERIH).

This sequence belongs to the krueppel C2H2-type zinc-finger protein family.

Its subcellular location is the nucleus. May be involved in transcriptional regulation. This is Gastrula zinc finger protein XlCGF7.1 from Xenopus laevis (African clawed frog).